Consider the following 1460-residue polypeptide: Nucleoporin NUP159 (1460 aa).

The interaction with DBP5 stretch occupies residues 1–500; the sequence is MSSLKDEVPT…SEQDATDPAS (500 aa). An FG 1 repeat occupies 228 to 231; it reads AVFG. A PXFG 1 repeat occupies 267–270; sequence PPFG. The disordered stretch occupies residues 401 to 435; it reads KSLSPTSEKIPIAGQEQEEKKKNNESSKALSENPF. Phosphoserine is present on Ser-404. One copy of the SXFGXPXFG 1 repeat lies at 462 to 470; it reads STFGAPSFG. Residues 483–504 form a disordered region; the sequence is STSTGVASSEQDATDPASAKPV. Positions 497-701 are interactions with CRM1 and GLE1; it reads DPASAKPVFG…KPNTSTKPKT (205 aa). The SXFGXPXFG 2; approximate repeat unit spans residues 503 to 511; the sequence is PVFGKPAFG. One copy of the SXFGXPXFG 3; approximate repeat lies at 522–530; sequence YAFGKPSFG. A PXFG 2 repeat occupies 532–535; sequence PSFG. A disordered region spans residues 533–619; that stretch reads SFGSGKSSVE…SAFGTASSNE (87 aa). Polar residues-rich tracts occupy residues 536–546, 556–567, 582–593, and 607–619; these read SGKSSVESPAS, GTPSFGSGNSSV, GTPSFGSGNSSA, and FGTS…SSNE. One copy of the SXFGXPXFG 4 repeat lies at 548-556; sequence SAFGKPSFG. Residues 558–561 form a PXFG 3 repeat; that stretch reads PSFG. Residues 574–582 form an SXFGXPXFG 5 repeat; the sequence is SAFGKPSFG. Residues 584-587 form a PXFG 4 repeat; that stretch reads PSFG. One copy of the SXFGXPXFG 6 repeat lies at 600 to 608; it reads SAFGKPSFG. One copy of the SXFG 1 repeat lies at 610 to 613; sequence SAFG. The SXFGXPXFG 7; approximate repeat unit spans residues 624-632; it reads SIFGKAAFG. An FG 2 repeat occupies 642-645; that stretch reads ELFG. Positions 647–704 are disordered; that stretch reads NFTISKPTVDSPKEVDSTSPFPSSGDQSEDESKSDVDSSSTPFGTKPNTSTKPKTNAF. Phosphoserine is present on Ser-657. The segment covering 683 to 704 has biased composition (low complexity); the sequence is DSSSTPFGTKPNTSTKPKTNAF. The FG 3 repeat unit spans residues 687 to 690; that stretch reads TPFG. The stretch at 704 to 707 is one FXFG 1 repeat; sequence FDFG. An SXFG 2 repeat occupies 709-712; it reads SSFG. Residue Ser-724 is modified to Phosphoserine. Composition is skewed to polar residues over residues 727-750, 757-767, and 778-800; these read TFKF…FSSF, NGSLSKGSTSE, and NGPN…STRL. The segment at 727 to 824 is disordered; the sequence is TFKFGTQASP…EAQKSPIGKL (98 aa). The FXFG 2 repeat unit spans residues 728-731; it reads FKFG. Ser-735 and Ser-745 each carry phosphoserine. Thr-803 carries the post-translational modification Phosphothreonine. Residues 804–814 are compositionally biased toward acidic residues; it reads PSDEDGEVVEE. Ser-805 and Ser-819 each carry phosphoserine. The PXFG 5 repeat unit spans residues 842-845; that stretch reads PVFG. Residues 861–889 are compositionally biased toward polar residues; sequence TNITKPSSTTPAFSFGNSTMNKSNTSTVS. The interval 861-1092 is disordered; the sequence is TNITKPSSTT…DINTDELPHG (232 aa). The stretch at 873 to 876 is one FXFG 3 repeat; the sequence is FSFG. Ser-889 bears the Phosphoserine mark. Over residues 917–936 the composition is skewed to basic and acidic residues; that stretch reads AKEERTGESSKKDHNDDPKD. A Phosphoserine modification is found at Ser-940. Residues 942-958 are compositionally biased toward polar residues; it reads SEISVRTSESAFDTTAN. Composition is skewed to basic and acidic residues over residues 960-1002, 1017-1027, 1035-1061, and 1068-1092; these read EIPK…KNNE, ALKKDNEKENF, QFED…KESD, and SDRD…LPHG. The interaction with DYN2 stretch occupies residues 1086–1175; the sequence is TDELPHGGEA…TCNFSVQTFE (90 aa). An interaction with NUP82 region spans residues 1223–1460; that stretch reads AEFTVLMENI…DFFKNLNMAK (238 aa). 2 coiled-coil regions span residues 1279 to 1320 and 1383 to 1418; these read EQMQ…YLFL and AKLA…GKKA.

As to quaternary structure, component of the nuclear pore complex (NPC). NPC constitutes the exclusive means of nucleocytoplasmic transport. NPCs allow the passive diffusion of ions and small molecules and the active, nuclear transport receptor-mediated bidirectional transport of macromolecules such as proteins, RNAs, ribonucleoparticles (RNPs), and ribosomal subunits across the nuclear envelope. Due to its 8-fold rotational symmetry, all subunits are present with 8 copies or multiples thereof. Part of the NUP82 subcomplex, interacts with NUP82 through its C-terminal coiled coil. This subcomplex is the base for interactions with NUP116 and GLE2, with NUP42 and GLE1 and with DYN2. Interacts directly with DYN2. Interacts through its FG repeats with karyopherins, such as heterodimeric mRNA transport factor MEX67/MTR2, CRM1 (XPO1), and PSE1 (GSP1-GDP dependent). Interaction with CRM1 (XPO1) is GSP1-GTP dependent and stimulated by RNA1. NUP159 also interacts with GLE1 and the ATP-dependent RNA helicase DBP5.

The protein localises to the nucleus. It localises to the nuclear pore complex. The protein resides in the nucleus membrane. Its function is as follows. Functions as a component of the nuclear pore complex (NPC). NPC components, collectively referred to as nucleoporins (NUPs), can play the role of both NPC structural components and of docking or interaction partners for transiently associated nuclear transport factors. Active directional transport is assured by both, a Phe-Gly (FG) repeat affinity gradient for these transport factors across the NPC and a transport cofactor concentration gradient across the nuclear envelope (GSP1 and GSP2 GTPases associated predominantly with GTP in the nucleus, with GDP in the cytoplasm). NUP159 plays an important role in several nuclear export pathways including poly(A)+ RNA, pre-ribosome, and protein export. In Saccharomyces cerevisiae (strain ATCC 204508 / S288c) (Baker's yeast), this protein is Nucleoporin NUP159 (NUP159).